Here is a 59-residue protein sequence, read N- to C-terminus: Antibacterial peptide enbocin (59 aa).

The N-terminal stretch at 1 to 20 (MNFTRIIFFLFVVVFATASG) is a signal peptide. Residue Lys-21 is a propeptide. Ser-58 carries the serine amide modification.

This sequence belongs to the cecropin family.

The protein resides in the secreted. Has antibacterial activity against Gram-positive and Gram-negative bacteria. This is Antibacterial peptide enbocin from Bombyx mori (Silk moth).